Here is a 476-residue protein sequence, read N- to C-terminus: UDP-N-acetylmuramate--L-alanine ligase (476 aa).

Position 123–129 (123–129 (GTHGKTT)) interacts with ATP.

The protein belongs to the MurCDEF family.

The protein localises to the cytoplasm. It catalyses the reaction UDP-N-acetyl-alpha-D-muramate + L-alanine + ATP = UDP-N-acetyl-alpha-D-muramoyl-L-alanine + ADP + phosphate + H(+). It participates in cell wall biogenesis; peptidoglycan biosynthesis. In terms of biological role, cell wall formation. The sequence is that of UDP-N-acetylmuramate--L-alanine ligase from Nitrosococcus oceani (strain ATCC 19707 / BCRC 17464 / JCM 30415 / NCIMB 11848 / C-107).